The following is a 256-amino-acid chain: MHPYFSLAGRIALVTGGSRGIGQMIAQGLLEAGARVFICARDAEACADTATRLSAYGDCQAIPADLSSEAGARRLAQALGELSARLDILVNNAGTSWGAALESYPVSGWEKVMQLNVTSVFSCIQQLLPLLRRSASAENPARVINIGSVAGISAMGEQAYAYGPSKAALHQLSRMLAKELVGEHINVNVIAPGRFPSRMTRHIANDPQALEADSASIPMGRWGRPEEMAALAISLAGTAGAYMTGNVIPIDGGFHL.

Position 14 to 38 (14 to 38 (VTGGSRGIGQMIAQGLLEAGARVFI)) interacts with NADP(+). Serine 148 contacts substrate. Tyrosine 162 (proton acceptor) is an active-site residue.

This sequence belongs to the short-chain dehydrogenases/reductases (SDR) family.

It carries out the reaction a (3R)-hydroxyacyl-[ACP] + NADP(+) = a 3-oxoacyl-[ACP] + NADPH + H(+). The protein operates within lipid metabolism; rhamnolipid biosynthesis. In terms of biological role, required for the synthesis of the beta-hydroxy acid moiety of rhamnolipids. In Pseudomonas aeruginosa (strain ATCC 15692 / DSM 22644 / CIP 104116 / JCM 14847 / LMG 12228 / 1C / PRS 101 / PAO1), this protein is Rhamnolipids biosynthesis 3-oxoacyl-[acyl-carrier-protein] reductase (rhlG).